We begin with the raw amino-acid sequence, 277 residues long: Carbonyl reductase [NADPH] 1 (277 aa).

Position 2 is an N-acetylserine (serine 2). Serine 2 and serine 30 each carry phosphoserine. Residues 10–34 (VTGG…GDVV), 63–64 (DI), and asparagine 90 contribute to the NADP(+) site. Glutathione-binding positions include 95 to 97 (FKV) and glutamine 106. Serine 140 is a substrate binding site. 193–194 (AY) is a binding site for glutathione. The active-site Proton acceptor is tyrosine 194. Residues 194 to 198 (YGVTK) and 231 to 233 (VRT) contribute to the NADP(+) site. Position 239 is an N6-1-carboxyethyl lysine (lysine 239).

The protein belongs to the short-chain dehydrogenases/reductases (SDR) family. Monomer. Expressed in kidney (at protein level).

The protein localises to the cytoplasm. The enzyme catalyses a secondary alcohol + NADP(+) = a ketone + NADPH + H(+). It carries out the reaction a primary alcohol + NADP(+) = an aldehyde + NADPH + H(+). The catalysed reaction is prostaglandin F2alpha + NADP(+) = prostaglandin E2 + NADPH + H(+). It catalyses the reaction prostaglandin E1 + NADP(+) = 15-oxoprostaglandin E1 + NADPH + H(+). The enzyme catalyses menadione + NADPH + H(+) = menadiol + NADP(+). It carries out the reaction prostaglandin D2 + NADP(+) = 15-oxoprostaglandin D2 + NADPH + H(+). The catalysed reaction is prostaglandin E2 + NADP(+) = 15-oxoprostaglandin E2 + NADPH + H(+). It catalyses the reaction prostaglandin F2alpha + NADP(+) = 15-oxoprostaglandin F2alpha + NADPH + H(+). The enzyme catalyses daunorubicin + NADPH + H(+) = 13-dihydrodaunorubicin + NADP(+). It carries out the reaction S-nitrosoglutathione + NADPH + H(+) = S-(hydroxysulfenamide)glutathione + NADP(+). The catalysed reaction is cortisol + NADPH + H(+) = 20beta-dihydrocortisol + NADP(+). It catalyses the reaction corticosterone + NADPH + H(+) = 20beta-dihydrocorticosterone + NADP(+). Its activity is regulated as follows. Inhibited by quercetin, rutenin and its derivatives. Its function is as follows. NADPH-dependent reductase with broad substrate specificity. Catalyzes the reduction of a wide variety of carbonyl compounds including quinones, prostaglandins, menadione, plus various xenobiotics. Catalyzes the reduction of the antitumor anthracyclines doxorubicin and daunorubicin to the cardiotoxic compounds doxorubicinol and daunorubicinol. Can convert prostaglandin E to prostaglandin F2-alpha. Can bind glutathione, which explains its higher affinity for glutathione-conjugated substrates. Catalyzes the reduction of S-nitrosoglutathione. In addition, participates in the glucocorticoid metabolism by catalyzing the NADPH-dependent cortisol/corticosterone into 20beta-dihydrocortisol (20b-DHF) or 20beta-corticosterone (20b-DHB), which are weak agonists of NR3C1 and NR3C2 in adipose tissue. This Homo sapiens (Human) protein is Carbonyl reductase [NADPH] 1.